A 137-amino-acid polypeptide reads, in one-letter code: uncharacterized protein (137 aa).

An N-terminal signal peptide occupies residues 1–19 (MVAFYGIFLFGTVYLFGLA).

This is an uncharacterized protein from Acanthamoeba polyphaga (Amoeba).